The primary structure comprises 495 residues: Acetyl-coenzyme A carboxylase carboxyl transferase subunit beta, chloroplastic (495 aa).

A disordered region spans residues 188 to 208; it reads SRNSSENEGSSRRTRTKGSDL. The 270-residue stretch at 226–495 folds into the CoA carboxyltransferase N-terminal domain; that stretch reads LWVQCENCYG…PLNQKSSKIK (270 aa). Zn(2+) contacts are provided by Cys-230, Cys-233, Cys-249, and Cys-252. The C4-type zinc-finger motif lies at 230–252; sequence CENCYGLNYKKFFKSKMNICEQC.

Belongs to the AccD/PCCB family. As to quaternary structure, acetyl-CoA carboxylase is a heterohexamer composed of biotin carboxyl carrier protein, biotin carboxylase and 2 subunits each of ACCase subunit alpha and ACCase plastid-coded subunit beta (accD). Zn(2+) serves as cofactor.

The protein resides in the plastid. Its subcellular location is the chloroplast stroma. The catalysed reaction is N(6)-carboxybiotinyl-L-lysyl-[protein] + acetyl-CoA = N(6)-biotinyl-L-lysyl-[protein] + malonyl-CoA. The protein operates within lipid metabolism; malonyl-CoA biosynthesis; malonyl-CoA from acetyl-CoA: step 1/1. In terms of biological role, component of the acetyl coenzyme A carboxylase (ACC) complex. Biotin carboxylase (BC) catalyzes the carboxylation of biotin on its carrier protein (BCCP) and then the CO(2) group is transferred by the transcarboxylase to acetyl-CoA to form malonyl-CoA. The polypeptide is Acetyl-coenzyme A carboxylase carboxyl transferase subunit beta, chloroplastic (Nicotiana tomentosiformis (Tobacco)).